A 297-amino-acid chain; its full sequence is Ribosome production factor 2 homolog (297 aa).

The region spanning 28–232 (KKALFCRGAK…VMRKKLADDA (205 aa)) is the Brix domain.

This sequence belongs to the RPF2 family.

The protein localises to the nucleus. Its subcellular location is the nucleolus. The protein is Ribosome production factor 2 homolog of Caenorhabditis elegans.